Consider the following 490-residue polypeptide: Betaine aldehyde dehydrogenase (490 aa).

Positions 27 and 93 each coordinate K(+). NAD(+) is bound at residue 150–152 (GAW). The active-site Charge relay system is Lys-162. 176–179 (KPSE) serves as a coordination point for NAD(+). Val-180 provides a ligand contact to K(+). An NAD(+)-binding site is contributed by 230–233 (GTTT). Leu-246 contacts K(+). Catalysis depends on Glu-252, which acts as the Proton acceptor. NAD(+) is bound by residues Gly-254, Cys-286, and Glu-387. The active-site Nucleophile is the Cys-286. Cys-286 is modified (cysteine sulfenic acid (-SOH)). The K(+) site is built by Lys-457 and Gly-460. Glu-464 functions as the Charge relay system in the catalytic mechanism.

It belongs to the aldehyde dehydrogenase family. As to quaternary structure, dimer of dimers. Requires K(+) as cofactor.

The enzyme catalyses betaine aldehyde + NAD(+) + H2O = glycine betaine + NADH + 2 H(+). The protein operates within amine and polyamine biosynthesis; betaine biosynthesis via choline pathway; betaine from betaine aldehyde: step 1/1. Its function is as follows. Involved in the biosynthesis of the osmoprotectant glycine betaine. Catalyzes the irreversible oxidation of betaine aldehyde to the corresponding acid. The polypeptide is Betaine aldehyde dehydrogenase (Pseudomonas putida (strain GB-1)).